The sequence spans 989 residues: DNA-directed RNA polymerase subunit beta' (989 aa).

Mg(2+)-binding residues include aspartate 383, aspartate 385, and aspartate 387.

This sequence belongs to the RNA polymerase beta' chain family. The RNAP catalytic core consists of 2 alpha, 1 beta, 1 beta' and 1 omega subunit. When a sigma factor is associated with the core the holoenzyme is formed, which can initiate transcription. The cofactor is Mg(2+).

The enzyme catalyses RNA(n) + a ribonucleoside 5'-triphosphate = RNA(n+1) + diphosphate. Functionally, DNA-dependent RNA polymerase catalyzes the transcription of DNA into RNA using the four ribonucleoside triphosphates as substrates. The chain is DNA-directed RNA polymerase subunit beta' (rpoC) from Leuconostoc pseudomesenteroides.